The primary structure comprises 26 residues: U1-poneritoxin-Ni1b (26 aa).

Belongs to the non-disulfide-bridged peptide (NDBP) superfamily. Medium-length antimicrobial peptide (group 3) family. Ponericin-W subfamily. As to expression, expressed by the venom gland.

The protein resides in the secreted. The protein localises to the target cell membrane. Functionally, has a broad spectrum of activity against both Gram-positive and Gram-negative bacteria and S.cerevisiae. Has insecticidal and hemolytic activities. May act by disrupting the integrity of the bacterial cell membrane. This is U1-poneritoxin-Ni1b from Neoponera inversa (Ant).